The primary structure comprises 120 residues: UPF0102 protein TWT_455 (120 aa).

It belongs to the UPF0102 family.

This is UPF0102 protein TWT_455 from Tropheryma whipplei (strain Twist) (Whipple's bacillus).